Consider the following 318-residue polypeptide: N-succinylornithine carbamoyltransferase (318 aa).

Carbamoyl phosphate is bound by residues serine 47–threonine 50, tryptophan 75, and arginine 110. Glutamate 142 is a N(2)-succinyl-L-ornithine binding site. Histidine 147–glutamine 150 is a carbamoyl phosphate binding site. N(2)-succinyl-L-ornithine is bound by residues histidine 176 and lysine 236. Residue cysteine 274 to leucine 275 participates in carbamoyl phosphate binding. Arginine 278 provides a ligand contact to N(2)-succinyl-L-ornithine. Arginine 302 contributes to the carbamoyl phosphate binding site.

This sequence belongs to the aspartate/ornithine carbamoyltransferase superfamily. SOTCase family. As to quaternary structure, homotrimer.

It carries out the reaction N(2)-succinyl-L-ornithine + carbamoyl phosphate = N(2)-succinyl-L-citrulline + phosphate + H(+). It functions in the pathway amino-acid biosynthesis; L-arginine biosynthesis. In terms of biological role, catalyzes the transfer of the carbamoyl group from carbamoyl phosphate to the delta-amino group of N(2)-succinyl-L-ornithine to produce N(2)-succinyl-L-citrulline. Is essential for arginine biosynthesis. Has no activity with either L-ornithine or L-aspartate as substrate. Also has no detectable AOTCase activity, being unable to convert N(2)-acetyl-L-ornithine to N(2)-acetyl-L-citrulline. The chain is N-succinylornithine carbamoyltransferase from Bacteroides thetaiotaomicron (strain ATCC 29148 / DSM 2079 / JCM 5827 / CCUG 10774 / NCTC 10582 / VPI-5482 / E50).